We begin with the raw amino-acid sequence, 280 residues long: MVEATKKAFVTGHPIKHSRSPKIHGHWLAQHGIDGSYEAIDVAPQDFAEFIAALQANGFRGGNVTIPHKEAAFAVAQRRDQAAEEIGAVNTLWFEDGVLRGGNTDGHGFAANLDDCAPGWANTGPAVVLGAGGASRAVIQALKQRGFSDIRIVNRTLARAQELRDRFGAGVSAHGTAATDELLADAGLLVNTTALGMVGNEGLAADPALLPDHAIVTDLVYVPLETPLLAAARARGLKTVDGLGMLLNQAVPGFEHWFGVRPQVTAELRALIVADLVPKP.

Shikimate-binding positions include 18–20 (SRS) and Thr65. Lys69 serves as the catalytic Proton acceptor. The shikimate site is built by Asn90 and Asp105. NADP(+) is bound by residues 130-134 (GAGGA), 154-159 (NRTLAR), and Leu219. Tyr221 contributes to the shikimate binding site. Position 242 (Gly242) interacts with NADP(+).

It belongs to the shikimate dehydrogenase family. As to quaternary structure, homodimer.

It carries out the reaction shikimate + NADP(+) = 3-dehydroshikimate + NADPH + H(+). It participates in metabolic intermediate biosynthesis; chorismate biosynthesis; chorismate from D-erythrose 4-phosphate and phosphoenolpyruvate: step 4/7. In terms of biological role, involved in the biosynthesis of the chorismate, which leads to the biosynthesis of aromatic amino acids. Catalyzes the reversible NADPH linked reduction of 3-dehydroshikimate (DHSA) to yield shikimate (SA). In Mesorhizobium japonicum (strain LMG 29417 / CECT 9101 / MAFF 303099) (Mesorhizobium loti (strain MAFF 303099)), this protein is Shikimate dehydrogenase (NADP(+)).